Reading from the N-terminus, the 89-residue chain is Probable Fe(2+)-trafficking protein (89 aa).

The protein belongs to the Fe(2+)-trafficking protein family.

Its function is as follows. Could be a mediator in iron transactions between iron acquisition and iron-requiring processes, such as synthesis and/or repair of Fe-S clusters in biosynthetic enzymes. The protein is Probable Fe(2+)-trafficking protein of Legionella pneumophila (strain Paris).